The following is a 216-amino-acid chain: uncharacterized protein (216 aa).

Residues 5 to 22 (LGLVFGSVILIYLISLFL) traverse the membrane as a helical segment.

It localises to the membrane. This is an uncharacterized protein from Aquifex aeolicus (strain VF5).